A 355-amino-acid polypeptide reads, in one-letter code: Serine acetyltransferase 4 (355 aa).

It belongs to the transferase hexapeptide repeat family. Homomultimer. In terms of tissue distribution, localized in vascular tissues, particularly in phloem.

The protein localises to the cytoplasm. The catalysed reaction is L-serine + acetyl-CoA = O-acetyl-L-serine + CoA. It functions in the pathway amino-acid biosynthesis; L-cysteine biosynthesis; L-cysteine from L-serine: step 1/2. Feedback inhibitions by L-Ser and acetyl-CoA. The polypeptide is Serine acetyltransferase 4 (Arabidopsis thaliana (Mouse-ear cress)).